The primary structure comprises 117 residues: MTSELPPQIQNQIAQLQQVQQQVQALSMQKSQIEAMQKESKMALEELERLADDAVIYRSVGELVIKTTKEESVSKLKDREETLSLRLQSISRQEERLTARFKQLQEQIQQALGPRAQ.

This sequence belongs to the prefoldin subunit beta family. In terms of assembly, heterohexamer of two alpha and four beta subunits.

Its subcellular location is the cytoplasm. Functionally, molecular chaperone capable of stabilizing a range of proteins. Seems to fulfill an ATP-independent, HSP70-like function in archaeal de novo protein folding. The chain is Prefoldin subunit beta from Methanosarcina mazei (strain ATCC BAA-159 / DSM 3647 / Goe1 / Go1 / JCM 11833 / OCM 88) (Methanosarcina frisia).